A 277-amino-acid chain; its full sequence is Large ribosomal subunit protein uL2 (277 aa).

Positions 219–277 are disordered; the sequence is RPQTRGSAMNPVDHPHGGGEGKKNSGRHPVTPWGKPTKGAKTRRKKASDKLIISRRKGK. Positions 231-241 are enriched in basic and acidic residues; it reads DHPHGGGEGKK. Basic residues predominate over residues 256-277; the sequence is KGAKTRRKKASDKLIISRRKGK.

This sequence belongs to the universal ribosomal protein uL2 family. As to quaternary structure, part of the 50S ribosomal subunit. Forms a bridge to the 30S subunit in the 70S ribosome.

In terms of biological role, one of the primary rRNA binding proteins. Required for association of the 30S and 50S subunits to form the 70S ribosome, for tRNA binding and peptide bond formation. It has been suggested to have peptidyltransferase activity; this is somewhat controversial. Makes several contacts with the 16S rRNA in the 70S ribosome. This is Large ribosomal subunit protein uL2 from Campylobacter curvus (strain 525.92).